Consider the following 412-residue polypeptide: MKDMGQKARHAAALLAVMSSEQKNKALEMIALSLEAQSAEILQANHQDLVNAAQNNLNVAMVDRLKLDKVRLCTIIDSVRQVACLPDPVGQVMSEWTRPNGLHIRRVRTPLGVIGIIYESRPSVTIDASILCLKSGNAAILRGGSDSFHSAHALHSALVKGLKEAGLPQDAIQMVGTKDRDVVGEMLKGLDGAIDVIVPRGGKDLVARVQSDARVPIFAHLEGLCHIYIDQSADLDMARNIVLNAKLRRTGICGAVETVLIDRQALKKFLPVLTALQEKGCEIRATEDIVFLLPDVKLASEEDWSQEYLDAILSVKTVEGIEGAIAHIRRYSSGHTESIIAEDMKVVKIFFNCLDSAILLHNASTQFADGGEFGFGAEIGIATGKMHARGPVGVEQLTSFQYHVKGNGQVRS.

The protein belongs to the gamma-glutamyl phosphate reductase family.

Its subcellular location is the cytoplasm. The enzyme catalyses L-glutamate 5-semialdehyde + phosphate + NADP(+) = L-glutamyl 5-phosphate + NADPH + H(+). It functions in the pathway amino-acid biosynthesis; L-proline biosynthesis; L-glutamate 5-semialdehyde from L-glutamate: step 2/2. Functionally, catalyzes the NADPH-dependent reduction of L-glutamate 5-phosphate into L-glutamate 5-semialdehyde and phosphate. The product spontaneously undergoes cyclization to form 1-pyrroline-5-carboxylate. This chain is Gamma-glutamyl phosphate reductase, found in Bartonella quintana (strain Toulouse) (Rochalimaea quintana).